The chain runs to 864 residues: DNA double-strand break repair Rad50 ATPase (864 aa).

Residues 32–38 (NGAGKSS) and Q131 contribute to the ATP site. Coiled-coil stretches lie at residues 176–319 (RELD…EKAI) and 376–413 (DIDK…EKNE). The 99-residue stretch at 380 to 478 (VNSLEQKVEE…ELNKIEREYR (99 aa)) folds into the Zinc-hook domain. Residues C426 and C429 each contribute to the Zn(2+) site. Residues 440–697 (KIIKEAKSYI…DREKIINAIN (258 aa)) adopt a coiled-coil conformation.

The protein belongs to the SMC family. RAD50 subfamily. In terms of assembly, homodimer. Forms a heterotetramer composed of two Mre11 subunits and two Rad50 subunits. Requires Zn(2+) as cofactor.

Functionally, part of the Rad50/Mre11 complex, which is involved in the early steps of DNA double-strand break (DSB) repair. The complex may facilitate opening of the processed DNA ends to aid in the recruitment of HerA and NurA. Rad50 controls the balance between DNA end bridging and DNA resection via ATP-dependent structural rearrangements of the Rad50/Mre11 complex. The protein is DNA double-strand break repair Rad50 ATPase of Saccharolobus solfataricus (strain ATCC 35092 / DSM 1617 / JCM 11322 / P2) (Sulfolobus solfataricus).